The sequence spans 316 residues: Transaldolase (316 aa).

Lys-132 serves as the catalytic Schiff-base intermediate with substrate.

This sequence belongs to the transaldolase family. Type 1 subfamily. As to quaternary structure, homodimer.

The protein resides in the cytoplasm. The catalysed reaction is D-sedoheptulose 7-phosphate + D-glyceraldehyde 3-phosphate = D-erythrose 4-phosphate + beta-D-fructose 6-phosphate. The protein operates within carbohydrate degradation; pentose phosphate pathway; D-glyceraldehyde 3-phosphate and beta-D-fructose 6-phosphate from D-ribose 5-phosphate and D-xylulose 5-phosphate (non-oxidative stage): step 2/3. In terms of biological role, transaldolase is important for the balance of metabolites in the pentose-phosphate pathway. This Aeromonas salmonicida (strain A449) protein is Transaldolase.